The primary structure comprises 610 residues: ABC transporter ATP-binding protein/permease wht-3 (610 aa).

The ABC transporter domain occupies 42–277 (VKTRKKLFSK…FADCGHPIPK (236 aa)). 74-81 (GASGAGKT) lines the ATP pocket. 5 helical membrane-spanning segments follow: residues 396–416 (ALYF…MTFM), 446–466 (LPLF…MIGL), 477–497 (ILIS…LACL), 503–523 (LAIA…GLYG), and 584–604 (VIGL…ALFI).

Belongs to the ABC transporter superfamily. ABCG family. Eye pigment precursor importer (TC 3.A.1.204) subfamily.

Its subcellular location is the membrane. Required for efficient RNA interference (RNAi) of pop-1 indicating a role in the germline development. This Caenorhabditis elegans protein is ABC transporter ATP-binding protein/permease wht-3 (wht-3).